We begin with the raw amino-acid sequence, 334 residues long: Probable GTP 3',8-cyclase (334 aa).

A Radical SAM core domain is found at 24 to 256 (PYGRKVTGLR…RKKYMIDGVE (233 aa)). Arginine 33 is a GTP binding site. [4Fe-4S] cluster contacts are provided by cysteine 40 and cysteine 44. Residue tyrosine 46 coordinates S-adenosyl-L-methionine. Cysteine 47 contacts [4Fe-4S] cluster. Lysine 85 contributes to the GTP binding site. Glycine 89 is a binding site for S-adenosyl-L-methionine. Threonine 113 serves as a coordination point for GTP. S-adenosyl-L-methionine is bound at residue serine 137. Lysine 176 serves as a coordination point for GTP. Positions 269 and 272 each coordinate [4Fe-4S] cluster. 274–276 (RLR) provides a ligand contact to GTP. Residue cysteine 286 coordinates [4Fe-4S] cluster.

It belongs to the radical SAM superfamily. MoaA family. [4Fe-4S] cluster serves as cofactor.

It carries out the reaction GTP + AH2 + S-adenosyl-L-methionine = (8S)-3',8-cyclo-7,8-dihydroguanosine 5'-triphosphate + 5'-deoxyadenosine + L-methionine + A + H(+). Its pathway is cofactor biosynthesis; molybdopterin biosynthesis. Its function is as follows. Catalyzes the cyclization of GTP to (8S)-3',8-cyclo-7,8-dihydroguanosine 5'-triphosphate. The protein is Probable GTP 3',8-cyclase of Methanosarcina mazei (strain ATCC BAA-159 / DSM 3647 / Goe1 / Go1 / JCM 11833 / OCM 88) (Methanosarcina frisia).